Reading from the N-terminus, the 474-residue chain is Iroquois-class homeodomain protein IRX-2 (474 aa).

Residues 115-177 (DPAYRKNATR…NARRRLKKEN (63 aa)) constitute a DNA-binding region (homeobox; TALE-type). 3 disordered regions span residues 177 to 220 (NKMT…EDEG), 262 to 373 (EDLE…PGGS), and 420 to 461 (PGET…DTSE). At serine 187 the chain carries Phosphoserine. Residues 196-210 (DASRSKEESSDKAQD) show a composition bias toward basic and acidic residues. The span at 262-275 (EDLEDEEDEEDECE) shows a compositional bias: acidic residues. 2 stretches are compositionally biased toward low complexity: residues 293–305 (EAPL…EAAP) and 358–373 (PAAA…PGGS).

Belongs to the TALE/IRO homeobox family. As to expression, expressed in specific and overlapping patterns with Irx1 and Irx3 in the developing and adult metanephric kidney. In the adult metanephros, renal expression is found in the loop of Henle in the S3 proximal tubule segment and in the thick ascending limb (TAL) of the distal tubule.

Its subcellular location is the nucleus. The sequence is that of Iroquois-class homeodomain protein IRX-2 (Irx2) from Mus musculus (Mouse).